Consider the following 472-residue polypeptide: POU domain, class 5, transcription factor 1 (472 aa).

2 disordered regions span residues 127 to 154 (MPSEVKTEKDVEEYGNEENKPPSQYHLT) and 187 to 255 (ISQA…LTTE). A compositionally biased stretch (polar residues) spans 220 to 234 (TAQNIPSAQAQSAPR). The span at 235-245 (SSGSSSGGCSN) shows a compositional bias: low complexity. The segment covering 246–255 (SEEEETLTTE) has biased composition (acidic residues). The 75-residue stretch at 249-323 (EETLTTEDLE…LLQRWLNEAE (75 aa)) folds into the POU-specific domain. Residues 343–402 (KRKRRTSLEGTVRSALESYFVKCPKPNTLEITHISDDLGLERDVVRVWFCNRRQKGKRLA) constitute a DNA-binding region (homeobox).

Belongs to the POU transcription factor family. Class-7 subfamily.

It is found in the nucleus. Involved in early development of embryos, especially in the process of gastrulation. May play an important role in establishing and specifying rhombomeric segments. Seems to be required to maintain the cells in a highly undifferentiated state. In contrast to POU2, T-POU2 lacks DNA-binding activity because of its incomplete pou domain structure. Overexpression of POU2 does not have any effect on development, whereas overexpression of t-POU2 causes developmental retardation or arrest before gastrulation. The chain is POU domain, class 5, transcription factor 1 (pou5f1) from Danio rerio (Zebrafish).